The chain runs to 344 residues: MTQITPQEALQRTIEHREIFHDEMLHLMRLIMRGELSPVMTAAIVTGLRVKKETIGEITAAAEVMREFSNKVHVEDKRHLVDIVGTGGDGANTFNISTCSIFVIAAAGGKVSKHGGRSVSSKSGSADAMEALGVNIQLTPEQIARSIADVGIGFMFAPNHHPAMKNVAPVRKELGVRTIFNILGPLTNPASAPNILMGVFHEDLVGIQVRALQRLGAEHAIVVYGRDGLDEISLGAGTLVGELKDGVVREYEIHPEDFGLRMVGTRAFKVDNPEESKAMLLGVLHGEKSAARDIVCLNAGAALYAANVASSIEDGMARAQAALDSGAALAKLNELVAYTARLTA.

Residues Gly-85, 88–89 (GD), Thr-93, 95–98 (NIST), 113–121 (KHGGRSVSS), and Ser-125 contribute to the 5-phospho-alpha-D-ribose 1-diphosphate site. Gly-85 serves as a coordination point for anthranilate. Residue Ser-97 coordinates Mg(2+). Position 171 (Arg-171) interacts with anthranilate. The Mg(2+) site is built by Asp-230 and Glu-231.

Belongs to the anthranilate phosphoribosyltransferase family. In terms of assembly, homodimer. It depends on Mg(2+) as a cofactor.

The enzyme catalyses N-(5-phospho-beta-D-ribosyl)anthranilate + diphosphate = 5-phospho-alpha-D-ribose 1-diphosphate + anthranilate. It functions in the pathway amino-acid biosynthesis; L-tryptophan biosynthesis; L-tryptophan from chorismate: step 2/5. In terms of biological role, catalyzes the transfer of the phosphoribosyl group of 5-phosphorylribose-1-pyrophosphate (PRPP) to anthranilate to yield N-(5'-phosphoribosyl)-anthranilate (PRA). The sequence is that of Anthranilate phosphoribosyltransferase from Delftia acidovorans (strain DSM 14801 / SPH-1).